A 356-amino-acid chain; its full sequence is MNISLLEGKKVVLLGQNVAKLEKLAQEYGEPAFRGRQIHEWLYQKGVRKLEEISVLPKLWRTTLSDQGVCTGRLEEVKRLVANDGTIKLLLETSDRESIEAVGIPTNSRLTTCVSSQVGCSMGCRFCATGKGGFQRSLEVHEIVDQVLSIREAFDRRPSHIVFMGMGEPLLNIESVLESISCLNNDLGIGQRRITVSTVGVVNTLPQLAELALAKLGRVQFTLALSLHAPNQHLREMLVPSAKVYPIQDLLSDCRHYLDITGRRISFEYILLATVNDKVEHAEELADLISGFQSHVNLIAYNPIDEEDYQRPSLARINRFMTVLQSRGVAVSLRASRGLDQDAACGQLRHQHTRLD.

Catalysis depends on Glu100, which acts as the Proton acceptor. Residues 106 to 340 (TNSRLTTCVS…VSLRASRGLD (235 aa)) enclose the Radical SAM core domain. Cysteines 113 and 345 form a disulfide. Cys120, Cys124, and Cys127 together coordinate [4Fe-4S] cluster. Residues 167-168 (GE), Ser197, 226-228 (SLH), and Asn302 contribute to the S-adenosyl-L-methionine site. The active-site S-methylcysteine intermediate is the Cys345.

It belongs to the radical SAM superfamily. RlmN family. The cofactor is [4Fe-4S] cluster.

The protein localises to the cytoplasm. The enzyme catalyses adenosine(2503) in 23S rRNA + 2 reduced [2Fe-2S]-[ferredoxin] + 2 S-adenosyl-L-methionine = 2-methyladenosine(2503) in 23S rRNA + 5'-deoxyadenosine + L-methionine + 2 oxidized [2Fe-2S]-[ferredoxin] + S-adenosyl-L-homocysteine. It catalyses the reaction adenosine(37) in tRNA + 2 reduced [2Fe-2S]-[ferredoxin] + 2 S-adenosyl-L-methionine = 2-methyladenosine(37) in tRNA + 5'-deoxyadenosine + L-methionine + 2 oxidized [2Fe-2S]-[ferredoxin] + S-adenosyl-L-homocysteine. Specifically methylates position 2 of adenine 2503 in 23S rRNA and position 2 of adenine 37 in tRNAs. This is Probable dual-specificity RNA methyltransferase RlmN from Prochlorococcus marinus (strain MIT 9211).